The primary structure comprises 693 residues: Subtilisin-like protease SBT4.10 (693 aa).

An N-terminal signal peptide occupies residues Met-1–Ala-25. The propeptide at Asp-26–His-113 is activation peptide. The 79-residue stretch at Val-35–His-113 folds into the Inhibitor I9 domain. One can recognise a Peptidase S8 domain in the interval Ser-117–Ile-536. The active-site Charge relay system is Asp-145. N-linked (GlcNAc...) asparagine glycosylation is present at Asn-176. His-200 (charge relay system) is an active-site residue. N-linked (GlcNAc...) asparagine glycosylation is found at Asn-215, Asn-223, Asn-368, Asn-413, and Asn-467. The PA domain maps to Gln-354 to Leu-396. The Charge relay system role is filled by Ser-475. Asn-559, Asn-603, and Asn-613 each carry an N-linked (GlcNAc...) asparagine glycan.

It belongs to the peptidase S8 family. The C-terminal propeptide is autocleaved.

It localises to the secreted. This Arabidopsis thaliana (Mouse-ear cress) protein is Subtilisin-like protease SBT4.10.